The primary structure comprises 67 residues: Large ribosomal subunit protein uL29 (67 aa).

It belongs to the universal ribosomal protein uL29 family.

This chain is Large ribosomal subunit protein uL29, found in Desulforudis audaxviator (strain MP104C).